Here is a 124-residue protein sequence, read N- to C-terminus: S-adenosylmethionine decarboxylase proenzyme (124 aa).

The active-site Schiff-base intermediate with substrate; via pyruvic acid is serine 63. Position 63 is a pyruvic acid (Ser); by autocatalysis (serine 63). The active-site Proton acceptor; for processing activity is the histidine 68. Cysteine 83 acts as the Proton donor; for catalytic activity in catalysis.

This sequence belongs to the prokaryotic AdoMetDC family. Type 1 subfamily. As to quaternary structure, heterotetramer of two alpha and two beta chains arranged as a dimer of alpha/beta heterodimers. The cofactor is pyruvate. Post-translationally, is synthesized initially as an inactive proenzyme. Formation of the active enzyme involves a self-maturation process in which the active site pyruvoyl group is generated from an internal serine residue via an autocatalytic post-translational modification. Two non-identical subunits are generated from the proenzyme in this reaction, and the pyruvate is formed at the N-terminus of the alpha chain, which is derived from the carboxyl end of the proenzyme. The post-translation cleavage follows an unusual pathway, termed non-hydrolytic serinolysis, in which the side chain hydroxyl group of the serine supplies its oxygen atom to form the C-terminus of the beta chain, while the remainder of the serine residue undergoes an oxidative deamination to produce ammonia and the pyruvoyl group blocking the N-terminus of the alpha chain.

The catalysed reaction is S-adenosyl-L-methionine + H(+) = S-adenosyl 3-(methylsulfanyl)propylamine + CO2. Its pathway is amine and polyamine biosynthesis; S-adenosylmethioninamine biosynthesis; S-adenosylmethioninamine from S-adenosyl-L-methionine: step 1/1. Functionally, catalyzes the decarboxylation of S-adenosylmethionine to S-adenosylmethioninamine (dcAdoMet), the propylamine donor required for the synthesis of the polyamines spermine and spermidine from the diamine putrescine. This Caldicellulosiruptor bescii (strain ATCC BAA-1888 / DSM 6725 / KCTC 15123 / Z-1320) (Anaerocellum thermophilum) protein is S-adenosylmethionine decarboxylase proenzyme.